Reading from the N-terminus, the 314-residue chain is Small ribosomal subunit biogenesis GTPase RsgA (314 aa).

Residues 1 to 20 (MKRAPTKQPAKPAARGGERA) are disordered. One can recognise a CP-type G domain in the interval 85–246 (SDQFKSKLFA…LIDSPGFQEF (162 aa)). Residues 134–137 (NKID) and 188–196 (GQSGMGKST) contribute to the GTP site. Residues Cys-270, Cys-275, His-277, and Cys-283 each coordinate Zn(2+).

It belongs to the TRAFAC class YlqF/YawG GTPase family. RsgA subfamily. In terms of assembly, monomer. Associates with 30S ribosomal subunit, binds 16S rRNA. Zn(2+) serves as cofactor.

The protein resides in the cytoplasm. One of several proteins that assist in the late maturation steps of the functional core of the 30S ribosomal subunit. Helps release RbfA from mature subunits. May play a role in the assembly of ribosomal proteins into the subunit. Circularly permuted GTPase that catalyzes slow GTP hydrolysis, GTPase activity is stimulated by the 30S ribosomal subunit. The chain is Small ribosomal subunit biogenesis GTPase RsgA from Burkholderia pseudomallei (strain K96243).